We begin with the raw amino-acid sequence, 499 residues long: Uridine-cytidine kinase A (499 aa).

Positions 1 to 44 are disordered; that stretch reads MSDNSTTKVTTNDSPSLTTTTSTTTAPTTTTTTTTTPTHNHDTT. Low complexity predominate over residues 10–38; the sequence is TTNDSPSLTTTTSTTTAPTTTTTTTTTPT. 78-85 provides a ligand contact to ATP; sequence GGSASGKT.

Belongs to the uridine kinase family.

The catalysed reaction is uridine + ATP = UMP + ADP + H(+). It carries out the reaction cytidine + ATP = CMP + ADP + H(+). The protein operates within pyrimidine metabolism; CTP biosynthesis via salvage pathway; CTP from cytidine: step 1/3. It participates in pyrimidine metabolism; UMP biosynthesis via salvage pathway; UMP from uridine: step 1/1. Catalyzes the conversion of uridine into uridine monophosphate and cytidine into cytidine monophosphate in the pyrimidine salvage pathway. The protein is Uridine-cytidine kinase A (udkA) of Dictyostelium discoideum (Social amoeba).